The chain runs to 192 residues: Apoptosis regulator BAX (192 aa).

Met-1 carries the post-translational modification N-acetylmethionine. A BH3 motif is present at residues 59-73; sequence LSECLRRIGDELDSN. Residues 98–118 carry the BH1 motif; sequence DMFADGNFNWGRVVALFYFAS. Lys-128 is covalently cross-linked (Glycyl lysine isopeptide (Lys-Gly) (interchain with G-Cter in ubiquitin)). The BH2 motif lies at 150-165; sequence VWIQDQGGWEGLLSYF. The chain crosses the membrane as a helical span at residues 172–192; it reads TVTIFVAGVLTASLTIWKKMG. Lys-190 is covalently cross-linked (Glycyl lysine isopeptide (Lys-Gly) (interchain with G-Cter in ubiquitin)).

Belongs to the Bcl-2 family. As to quaternary structure, homodimer. Forms higher oligomers under stress conditions. Forms heterooligomers with BAK. Interacts with BCL2L11. Interaction with BCL2L11 promotes BAX oligomerization and association with mitochondrial membranes, with subsequent release of cytochrome c. Forms heterodimers with BCL2. Forms heterodimers with BCL2L1 isoform Bcl-X(L), BCL2L2, MCL1 and A1. Interacts with SH3GLB1. Interacts with SFN and YWHAZ; the interaction occurs in the cytoplasm. Under stress conditions, JNK-mediated phosphorylation of SFN and YWHAZ, releases BAX to mitochondria. Interacts with RNF144B, which regulates the ubiquitin-dependent stability of BAX. Interacts with CLU under stress conditions that cause a conformation change leading to BAX oligomerization and association with mitochondria. Does not interact with CLU in unstressed cells. Interacts with FAIM2/LFG2. Interacts with BOP. Interacts (via a C-terminal 33 residues) with NOL3 (via CARD domain); inhibits BAX activation and translocationand consequently cytochrome c release from mitochondria. Interacts with GIMAP3/IAN4 and GIMAP5/IAN5; this interaction is increased, when cells initiate apoptosis upon IL2 withdrawal. Interacts with IRF3; the interaction is direct and, upon virus infection, mediates the formation of the apoptosis complex TOMM70:HSP90AA1:IRF3:BAX. Interacts with MOAP1, facilitating BAX-dependent mitochondrial outer membrane permeabilization and apoptosis. Interacts with BCL2L10/BCL-B. Interacts with non-acetylated XRCC6/Ku70; this interaction leads to BAX sequestration in the cytosol, away from the mitochondria, preventing BAX-mediated apoptosis. (Microbial infection) Interacts with gamma-herpesvirus 68 protein vBCL2. Post-translationally, ubiquitinated in the absence of XRCC6/Ku70. Ubiquitinated on Lys-128 and Lys-190. 'Lys-63'-linked polyubiquitin chains on Lys-128 are removed by USP12. Expressed in a wide variety of tissues.

The protein localises to the mitochondrion outer membrane. Its subcellular location is the cytoplasm. It is found in the nucleus. Accelerates programmed cell death by binding to, and antagonizing the apoptosis repressor BCL2 or its adenovirus homolog E1B 19k protein. Under stress conditions, undergoes a conformation change that causes translocation to the mitochondrion membrane, leading to the release of cytochrome c that then triggers apoptosis. Promotes activation of CASP3, and thereby apoptosis. BAX deficiency leads to lymphoid hyperplasia and male sterility, because of the cessation of sperm production. This Mus musculus (Mouse) protein is Apoptosis regulator BAX (Bax).